Consider the following 900-residue polypeptide: Peroxisomal hydratase-dehydrogenase-epimerase (900 aa).

Short-chain dehydrogenase like stretches follow at residues 6–230 (SFKD…THES) and 319–535 (SLCN…ASEE). The NADP(+) site is built by isoleucine 14, lysine 53, asparagine 100, arginine 133, tyrosine 165, and lysine 169. Residue tyrosine 165 is the Proton donor of the active site. The Lowers pKa of active site Tyr role is filled by lysine 169. (3R)-3-hydroxydecanoyl-CoA contacts are provided by histidine 689, glycine 690, lysine 719, aspartate 803, asparagine 805, glycine 826, phenylalanine 851, and threonine 852. The MaoC-like domain maps to 775–887 (EVPHGKVPDF…DTTRNVIVLD (113 aa)). The Microbody targeting signal signature appears at 898–900 (SKL).

This sequence belongs to the short-chain dehydrogenases/reductases (SDR) family. As to quaternary structure, monomer.

It localises to the peroxisome. It carries out the reaction a (3R)-3-hydroxyacyl-CoA = a (2E)-enoyl-CoA + H2O. It catalyses the reaction a (3R)-3-hydroxyacyl-CoA + NAD(+) = a 3-oxoacyl-CoA + NADH + H(+). It functions in the pathway lipid metabolism; fatty acid beta-oxidation. Functionally, second trifunctional enzyme acting on the beta-oxidation pathway for fatty acids, possessing hydratase-dehydrogenase-epimerase activities. Converts trans-2-enoyl-CoA via D-3-hydroxyacyl-CoA to 3-ketoacyl-CoA. This Saccharomyces cerevisiae (strain ATCC 204508 / S288c) (Baker's yeast) protein is Peroxisomal hydratase-dehydrogenase-epimerase (FOX2).